Consider the following 174-residue polypeptide: Crossover junction endodeoxyribonuclease RuvC (174 aa).

Residues Asp16, Glu76, and Asp148 contribute to the active site. Residues Asp16, Glu76, and Asp148 each coordinate Mg(2+).

Belongs to the RuvC family. As to quaternary structure, homodimer which binds Holliday junction (HJ) DNA. The HJ becomes 2-fold symmetrical on binding to RuvC with unstacked arms; it has a different conformation from HJ DNA in complex with RuvA. In the full resolvosome a probable DNA-RuvA(4)-RuvB(12)-RuvC(2) complex forms which resolves the HJ. Requires Mg(2+) as cofactor.

Its subcellular location is the cytoplasm. The catalysed reaction is Endonucleolytic cleavage at a junction such as a reciprocal single-stranded crossover between two homologous DNA duplexes (Holliday junction).. The RuvA-RuvB-RuvC complex processes Holliday junction (HJ) DNA during genetic recombination and DNA repair. Endonuclease that resolves HJ intermediates. Cleaves cruciform DNA by making single-stranded nicks across the HJ at symmetrical positions within the homologous arms, yielding a 5'-phosphate and a 3'-hydroxyl group; requires a central core of homology in the junction. The consensus cleavage sequence is 5'-(A/T)TT(C/G)-3'. Cleavage occurs on the 3'-side of the TT dinucleotide at the point of strand exchange. HJ branch migration catalyzed by RuvA-RuvB allows RuvC to scan DNA until it finds its consensus sequence, where it cleaves and resolves the cruciform DNA. This is Crossover junction endodeoxyribonuclease RuvC from Rhodopseudomonas palustris (strain BisA53).